The following is a 225-amino-acid chain: Golgi to ER traffic protein 1 (225 aa).

Residue Met1 is a topological domain, lumenal. The chain crosses the membrane as a helical span at residues 2–21; it reads NWVIIAALFFVIINKLLQYT. The Cytoplasmic portion of the chain corresponds to 22–107; sequence SRYQEAWINK…SQSKLFNRLK (86 aa). Residues 37 to 104 are a coiled coil; it reads DISSLSKEYS…AKDSQSKLFN (68 aa). A helical transmembrane segment spans residues 108–128; it reads LLTLTLPFMILKLWKGKFIVY. Over 129–172 the chain is Lumenal; the sequence is DIPTKDTFPVIVNGVLSQGLLYIPLLPINFLRGIDPNKHILVPG. Residues 173-189 traverse the membrane as a helical segment; sequence VSLGIWLMALTKTIDTV. Residues 190-225 lie on the Cytoplasmic side of the membrane; sequence EFIVKQLVFQPVVSKQVKEKTKEKVVELKTTEAELD.

Belongs to the WRB/GET1 family. As to quaternary structure, component of the Golgi to ER traffic (GET) complex, which is composed of GET1, GET2 and GET3. Within the complex, GET1 and GET2 form a heterotetramer which is stabilized by phosphatidylinositol binding and which binds to the GET3 homodimer.

Its subcellular location is the endoplasmic reticulum membrane. The protein resides in the golgi apparatus membrane. Required for the post-translational delivery of tail-anchored (TA) proteins to the endoplasmic reticulum. Together with GET2, acts as a membrane receptor for soluble GET3, which recognizes and selectively binds the transmembrane domain of TA proteins in the cytosol. The GET complex cooperates with the HDEL receptor ERD2 to mediate the ATP-dependent retrieval of resident ER proteins that contain a C-terminal H-D-E-L retention signal from the Golgi to the ER. The protein is Golgi to ER traffic protein 1 of Vanderwaltozyma polyspora (strain ATCC 22028 / DSM 70294 / BCRC 21397 / CBS 2163 / NBRC 10782 / NRRL Y-8283 / UCD 57-17) (Kluyveromyces polysporus).